Here is a 397-residue protein sequence, read N- to C-terminus: Probable transport protein MmpL6 (397 aa).

Helical transmembrane passes span 190 to 210 (YDLLIAGIAALSLILLIMMII), 214 to 234 (LVAALVIVGTVALSLGASFGL), 242 to 262 (LLGIQLYWIVLALAVILLLAV), 293 to 313 (TGGVVTAAGLVFAATMSSFVF), and 328 to 348 (LGLLFDTLVVRAFMTPSIAVL).

Belongs to the resistance-nodulation-cell division (RND) (TC 2.A.6) family. MmpL subfamily.

The protein localises to the cell membrane. This is Probable transport protein MmpL6 (mmpL6) from Mycobacterium tuberculosis (strain CDC 1551 / Oshkosh).